Reading from the N-terminus, the 398-residue chain is 1-deoxy-D-xylulose 5-phosphate reductoisomerase (398 aa).

The NADPH site is built by T11, G12, S13, I14, and N125. Residue K126 participates in 1-deoxy-D-xylulose 5-phosphate binding. Residue E127 participates in NADPH binding. Residue D151 coordinates Mn(2+). The 1-deoxy-D-xylulose 5-phosphate site is built by S152, E153, S186, and H209. E153 is a binding site for Mn(2+). Position 215 (G215) interacts with NADPH. S222, N227, K228, and E231 together coordinate 1-deoxy-D-xylulose 5-phosphate. E231 is a Mn(2+) binding site.

The protein belongs to the DXR family. Requires Mg(2+) as cofactor. The cofactor is Mn(2+).

The enzyme catalyses 2-C-methyl-D-erythritol 4-phosphate + NADP(+) = 1-deoxy-D-xylulose 5-phosphate + NADPH + H(+). Its pathway is isoprenoid biosynthesis; isopentenyl diphosphate biosynthesis via DXP pathway; isopentenyl diphosphate from 1-deoxy-D-xylulose 5-phosphate: step 1/6. Functionally, catalyzes the NADPH-dependent rearrangement and reduction of 1-deoxy-D-xylulose-5-phosphate (DXP) to 2-C-methyl-D-erythritol 4-phosphate (MEP). The polypeptide is 1-deoxy-D-xylulose 5-phosphate reductoisomerase (Acinetobacter baumannii (strain ACICU)).